Consider the following 269-residue polypeptide: AA9 family lytic polysaccharide monooxygenase I (269 aa).

The N-terminal stretch at M1–A17 is a signal peptide. 2 residues coordinate Cu(2+): H18 and H103. A disulfide bridge connects residues C73 and C196. N156 carries an N-linked (GlcNAc...) asparagine glycan. O2 contacts are provided by H182 and Q191. Y193 contacts Cu(2+).

This sequence belongs to the polysaccharide monooxygenase AA9 family. The cofactor is Cu(2+).

The protein localises to the secreted. It catalyses the reaction [(1-&gt;4)-beta-D-glucosyl]n+m + reduced acceptor + O2 = 4-dehydro-beta-D-glucosyl-[(1-&gt;4)-beta-D-glucosyl]n-1 + [(1-&gt;4)-beta-D-glucosyl]m + acceptor + H2O.. Its function is as follows. Lytic polysaccharide monooxygenase (LPMO) that depolymerizes crystalline and amorphous polysaccharides via the oxidation of scissile alpha- or beta-(1-4)-glycosidic bonds, yielding C1 and C4 oxidation products. Catalysis by LPMOs requires the reduction of the active-site copper from Cu(II) to Cu(I) by a reducing agent and H(2)O(2) or O(2) as a cosubstrate. This chain is AA9 family lytic polysaccharide monooxygenase I, found in Botryotinia fuckeliana (strain B05.10) (Noble rot fungus).